Here is a 184-residue protein sequence, read N- to C-terminus: Peptidyl-tRNA hydrolase (184 aa).

Tyr-14 provides a ligand contact to tRNA. His-19 (proton acceptor) is an active-site residue. Positions 64, 66, and 112 each coordinate tRNA.

This sequence belongs to the PTH family. In terms of assembly, monomer.

The protein resides in the cytoplasm. The enzyme catalyses an N-acyl-L-alpha-aminoacyl-tRNA + H2O = an N-acyl-L-amino acid + a tRNA + H(+). Its function is as follows. Hydrolyzes ribosome-free peptidyl-tRNAs (with 1 or more amino acids incorporated), which drop off the ribosome during protein synthesis, or as a result of ribosome stalling. In terms of biological role, catalyzes the release of premature peptidyl moieties from peptidyl-tRNA molecules trapped in stalled 50S ribosomal subunits, and thus maintains levels of free tRNAs and 50S ribosomes. This chain is Peptidyl-tRNA hydrolase, found in Thermoanaerobacter pseudethanolicus (strain ATCC 33223 / 39E) (Clostridium thermohydrosulfuricum).